A 772-amino-acid polypeptide reads, in one-letter code: Magnetosome formation protease MamE (772 aa).

Residues 1 to 21 (MTMFNGDVEDGGRSNVSCGKD) are Cytoplasmic-facing. Residues 22 to 42 (LKRYLMLMGVVALVVLFGAFI) traverse the membrane as a helical segment. At 43-772 (YRQSSGGLRL…RNGQEFWIVL (730 aa)) the chain is on the lumenal side. Active-site charge relay system residues include H187, D220, and S296. An MCR (magnetochrome) 1 motif is present at residues 374 to 397 (IAAGTPSPHVDGRQNMDCSNCHDI). Heme contacts are provided by C391, C394, H395, C437, C440, H441, C488, C491, and H492. Short sequence motifs (MCR) lie at residues 420–443 (IPAN…CHQF) and 470–494 (AIRA…CHQI). A Cytochrome c domain is found at 445–558 (GGAAAGPIAF…ALTPLTQRLG (114 aa)). 2 consecutive PDZ domains span residues 522-626 (AINI…LRAG) and 696-765 (GATP…HRNG).

The protein in the N-terminal section; belongs to the peptidase S1C family. In terms of assembly, might interact with MamB via PDZ1. Requires heme as cofactor. The protein isolated from magnetosome membranes has a molecular weight of about 36.3 kDa, probably due to C-terminal cleavage. Subject to autocatalytic cleavage; cleavage also requires MamO; these may be the same event.

It is found in the magnetosome membrane. Its function is as follows. Acts at 2 distinct steps of magnetosome formation; required for correct localization of proteins to the magnetosome while the protease activity is required for maturation of small magnetite crystals into larger, functional ones. Probably cleaves at least itself, MamO and MamP; cleavage requires the putative transprot domain of MamO. Involved in localization of some proteins (at least MamA, MamC, MamF, MamI and MamJ) to the magnetosome. One of 7 genes (mamLQBIEMO) able to induce magnetosome membrane biogenesis; coexpression of mamLQRBIEMO in a deletion of the 17 gene mamAB operon restores magnetosome vesicle formation but not magnetite biosynthesis. In Magnetospirillum gryphiswaldense (strain DSM 6361 / JCM 21280 / NBRC 15271 / MSR-1), this protein is Magnetosome formation protease MamE.